We begin with the raw amino-acid sequence, 251 residues long: Phosphomannomutase (251 aa).

D18 acts as the Nucleophile in catalysis. Mg(2+) is bound by residues D18 and D20. D20 acts as the Proton donor/acceptor in catalysis. Alpha-D-mannose 1-phosphate contacts are provided by R27, R129, R140, R147, S185, and D187. 4 residues coordinate Mg(2+): D213, F225, D227, and T230.

It belongs to the eukaryotic PMM family. As to quaternary structure, homodimer. Mg(2+) is required as a cofactor.

Its subcellular location is the cytoplasm. The enzyme catalyses alpha-D-mannose 1-phosphate = D-mannose 6-phosphate. The protein operates within nucleotide-sugar biosynthesis; GDP-alpha-D-mannose biosynthesis; alpha-D-mannose 1-phosphate from D-fructose 6-phosphate: step 2/2. Its function is as follows. Catalyzes the interconversion of mannose-6-phosphate to mannose-1-phosphate, the precursor for the synthesis of GDP-mannose. GDP-mannose is an essential sugar nucleotide for the synthesis of D-mannose-containing cell wall polysaccharides (galactomannans and glucomannans), glycolipids, glycoproteins and the antioxidant L-ascorbate. This chain is Phosphomannomutase, found in Galdieria sulphuraria (Red alga).